A 612-amino-acid chain; its full sequence is Alpha-glycerophosphate oxidase (612 aa).

21–49 contributes to the FAD binding site; that stretch reads DLLIIGGGITGAGVALQAAASGLDTGLIE. Residues 399 to 408 are compositionally biased toward basic and acidic residues; it reads ETSTSEKELD. A disordered region spans residues 399–418; that stretch reads ETSTSEKELDPSAVSRGSSF.

It belongs to the FAD-dependent glycerol-3-phosphate dehydrogenase family. It depends on FAD as a cofactor.

It is found in the cytoplasm. It catalyses the reaction sn-glycerol 3-phosphate + O2 = dihydroxyacetone phosphate + H2O2. The polypeptide is Alpha-glycerophosphate oxidase (glpO) (Streptococcus pyogenes serotype M1).